Here is a 49-residue protein sequence, read N- to C-terminus: Large ribosomal subunit protein bL33B (49 aa).

The protein belongs to the bacterial ribosomal protein bL33 family.

In Limosilactobacillus reuteri subsp. reuteri (strain JCM 1112) (Lactobacillus reuteri), this protein is Large ribosomal subunit protein bL33B.